The primary structure comprises 238 residues: Epoxyqueuosine reductase QueH (238 aa).

Residues Cys43, Cys44, Cys129, and Cys132 each coordinate [4Fe-4S] cluster. Cys211 and Cys213 are disulfide-bonded.

This sequence belongs to the QueH family.

It carries out the reaction epoxyqueuosine(34) in tRNA + AH2 = queuosine(34) in tRNA + A + H2O. Its pathway is tRNA modification; tRNA-queuosine biosynthesis. Catalyzes the conversion of epoxyqueuosine (oQ) to queuosine (Q), which is a hypermodified base found in the wobble positions of tRNA(Asp), tRNA(Asn), tRNA(His) and tRNA(Tyr). This chain is Epoxyqueuosine reductase QueH, found in Staphylococcus epidermidis (strain ATCC 12228 / FDA PCI 1200).